The chain runs to 165 residues: Ribonuclease H2 subunit C (165 aa).

Residue M1 is modified to N-acetylmethionine.

Belongs to the RNase H2 subunit C family. As to quaternary structure, the RNase H2 complex is a heterotrimer composed of the catalytic subunit RNASEH2A and the non-catalytic subunits RNASEH2B and RNASEH2C.

Its subcellular location is the nucleus. Its function is as follows. Non catalytic subunit of RNase H2, an endonuclease that specifically degrades the RNA of RNA:DNA hybrids. Participates in DNA replication, possibly by mediating the removal of lagging-strand Okazaki fragment RNA primers during DNA replication. Mediates the excision of single ribonucleotides from DNA:RNA duplexes. In Bos taurus (Bovine), this protein is Ribonuclease H2 subunit C (RNASEH2C).